The following is a 308-amino-acid chain: Acetyl-coenzyme A carboxylase carboxyl transferase subunit alpha (308 aa).

One can recognise a CoA carboxyltransferase C-terminal domain in the interval 36–286; it reads ELEKEVSSVY…ESYFLKAFEE (251 aa).

This sequence belongs to the AccA family. As to quaternary structure, acetyl-CoA carboxylase is a heterohexamer composed of biotin carboxyl carrier protein (AccB), biotin carboxylase (AccC) and two subunits each of ACCase subunit alpha (AccA) and ACCase subunit beta (AccD).

The protein resides in the cytoplasm. The catalysed reaction is N(6)-carboxybiotinyl-L-lysyl-[protein] + acetyl-CoA = N(6)-biotinyl-L-lysyl-[protein] + malonyl-CoA. It participates in lipid metabolism; malonyl-CoA biosynthesis; malonyl-CoA from acetyl-CoA: step 1/1. Its function is as follows. Component of the acetyl coenzyme A carboxylase (ACC) complex. First, biotin carboxylase catalyzes the carboxylation of biotin on its carrier protein (BCCP) and then the CO(2) group is transferred by the carboxyltransferase to acetyl-CoA to form malonyl-CoA. In Helicobacter hepaticus (strain ATCC 51449 / 3B1), this protein is Acetyl-coenzyme A carboxylase carboxyl transferase subunit alpha.